Reading from the N-terminus, the 596-residue chain is Beta-glucuronidase (596 aa).

Residues Asp168 and Asn412 each contribute to the D-glucuronate site. The Proton donor role is filled by Glu413. Residues Asn464, Tyr470, Glu502, Trp547, and Lys566 each contribute to the D-glucuronate site. Glu502 serves as the catalytic Nucleophile. The N-K motif motif lies at 564-566 (NKK).

Belongs to the glycosyl hydrolase 2 family.

It is found in the cytoplasm. It carries out the reaction a beta-D-glucuronoside + H2O = D-glucuronate + an alcohol. Functionally, displays beta-glucuronidase activity with the artificial substrate p-nitrophenyl-beta-D-glucuronide (PNPG). Is probably involved in the metabolism of oligosaccharides containing the 3-O-beta-D-glucopyranosyl-beta-D-glucuronide structure released from bacterial and plant acidic carbohydrates. The protein is Beta-glucuronidase of Paenibacillus borealis.